Consider the following 207-residue polypeptide: Ras-related protein Rab-8B (207 aa).

The GTP site is built by Ser17, Gly18, Val19, Gly20, Lys21, Thr22, Cys23, Thr35, Ser39, and Thr40. Residue Thr22 coordinates Mg(2+). Short sequence motifs (switch) lie at residues 31 to 45 and 63 to 80; these read DAFNTTFISTIGIDF and DTAGQERFRTITTAYYRG. Mg(2+) contacts are provided by Thr40 and Asp63. Residue Gly66 participates in GTP binding. Residue Thr72 is modified to Phosphothreonine. 5 residues coordinate GTP: Asn121, Lys122, Asp124, Ala152, and Lys153. Residue Ser180 is modified to Phosphoserine. At Cys204 the chain carries Cysteine methyl ester. Cys204 carries S-geranylgeranyl cysteine lipidation. A propeptide spans 205–207 (removed in mature form); sequence LLL.

It belongs to the small GTPase superfamily. Rab family. In terms of assembly, associated with actin, delta-catenin and alpha and beta tubulins. Interacts with OTOF. Interacts with PEX5R. Interacts with RAB3IP. Interacts with VIM. Interacts with CDH1. Interacts with MICALL2. Interacts with GDI1, GDI2, CHML and CHM; phosphorylation at Thr-72 disrupts these interactions. Interacts with MICAL1. Mg(2+) is required as a cofactor. Post-translationally, phosphorylation of Thr-72 in the switch II region by LRRK2 prevents the association of RAB regulatory proteins, including CHM, CHML and RAB GDP dissociation inhibitors GDI1 and GDI2.

The protein resides in the cell membrane. Its subcellular location is the cytoplasmic vesicle. It is found in the phagosome membrane. It localises to the endosome membrane. The catalysed reaction is GTP + H2O = GDP + phosphate + H(+). Its activity is regulated as follows. Regulated by guanine nucleotide exchange factors (GEFs) including RAB3IP/RABIN8 which promotes the exchange of bound GDP for free GTP. Regulated by GTPase activating proteins (GAPs) which increase the GTP hydrolysis activity. Inhibited by GDP dissociation inhibitors (GDIs). In terms of biological role, the small GTPases Rab are key regulators of intracellular membrane trafficking, from the formation of transport vesicles to their fusion with membranes. Rabs cycle between an inactive GDP-bound form and an active GTP-bound form that is able to recruit to membranes different sets of downstream effectors directly responsible for vesicle formation, movement, tethering and fusion. RAB8B may be involved in polarized vesicular trafficking and neurotransmitter release. May participate in cell junction dynamics in Sertoli cells. May also participate in the export of a subset of neosynthesized proteins through a Rab8-Rab10-Rab11-dependent endososomal export route. The polypeptide is Ras-related protein Rab-8B (RAB8B) (Pongo abelii (Sumatran orangutan)).